The primary structure comprises 1635 residues: U3 small nucleolar RNA-associated protein 10 (1635 aa).

Positions 781 to 803 are disordered; that stretch reads TTSMDAPSDESTKRRRRSSSSTV. Transmembrane regions (helical) follow at residues 1141–1161 and 1288–1308; these read PELL…TVAG and IALS…SFMV.

Belongs to the HEATR1/UTP10 family. Component of the ribosomal small subunit (SSU) processome.

The protein resides in the nucleus. It is found in the nucleolus. Its subcellular location is the membrane. In terms of biological role, involved in nucleolar processing of pre-18S ribosomal RNA. Involved in ribosome biosynthesis. This is U3 small nucleolar RNA-associated protein 10 from Yarrowia lipolytica (strain CLIB 122 / E 150) (Yeast).